A 313-amino-acid chain; its full sequence is MSLRIVFLGSPTFAVLPLERLVADSRYQVVGVVTQPDRPAGRGKMPVATPVKQAALRLGLPVLTPETLRDPAAVADLADLRPDVGVVAAYGEILRRDVLAIPPLGYVNIHPSLLPLYRGPSPVAGAILNGDAETGVTIMVIEAKMDAGPILAQRVVPLPPDARTGSLTRELFAIGADMLLETLDAYATGAITPHPQDHARATFTKLLSREDGIIDWSQPALRIERMTRAYDPWPGATTTWRGAPLKIIAARVRSDRHSDAPPGTLLDTAEGLAVATGDGLLVLETVQPAGKRPLPAADWRRGVRLTGGERLGG.

Ser112–Pro115 lines the (6S)-5,6,7,8-tetrahydrofolate pocket.

This sequence belongs to the Fmt family.

The enzyme catalyses L-methionyl-tRNA(fMet) + (6R)-10-formyltetrahydrofolate = N-formyl-L-methionyl-tRNA(fMet) + (6S)-5,6,7,8-tetrahydrofolate + H(+). Its function is as follows. Attaches a formyl group to the free amino group of methionyl-tRNA(fMet). The formyl group appears to play a dual role in the initiator identity of N-formylmethionyl-tRNA by promoting its recognition by IF2 and preventing the misappropriation of this tRNA by the elongation apparatus. This chain is Methionyl-tRNA formyltransferase, found in Roseiflexus castenholzii (strain DSM 13941 / HLO8).